Here is a 266-residue protein sequence, read N- to C-terminus: 4-hydroxy-tetrahydrodipicolinate reductase (266 aa).

10 to 15 provides a ligand contact to NAD(+); the sequence is GPRGRM. Residue lysine 38 participates in NADP(+) binding. NAD(+) contacts are provided by residues 99–101 and 125–128; these read GTT and APNF. Catalysis depends on histidine 155, which acts as the Proton donor/acceptor. Histidine 156 serves as a coordination point for (S)-2,3,4,5-tetrahydrodipicolinate. The active-site Proton donor is the lysine 159. A (S)-2,3,4,5-tetrahydrodipicolinate-binding site is contributed by 165–166; it reads GT.

Belongs to the DapB family.

It is found in the cytoplasm. It carries out the reaction (S)-2,3,4,5-tetrahydrodipicolinate + NAD(+) + H2O = (2S,4S)-4-hydroxy-2,3,4,5-tetrahydrodipicolinate + NADH + H(+). The enzyme catalyses (S)-2,3,4,5-tetrahydrodipicolinate + NADP(+) + H2O = (2S,4S)-4-hydroxy-2,3,4,5-tetrahydrodipicolinate + NADPH + H(+). It participates in amino-acid biosynthesis; L-lysine biosynthesis via DAP pathway; (S)-tetrahydrodipicolinate from L-aspartate: step 4/4. Catalyzes the conversion of 4-hydroxy-tetrahydrodipicolinate (HTPA) to tetrahydrodipicolinate. The sequence is that of 4-hydroxy-tetrahydrodipicolinate reductase from Bacillus cereus (strain Q1).